The primary structure comprises 273 residues: Kit ligand (273 aa).

A signal peptide spans 1–25 (MKKTQTWIITCIYLQLLLFNPLVKT). Residues 26–214 (KEICGNPVTD…AKAPEDSGLQ (189 aa)) are Extracellular-facing. Cystine bridges form between Cys29/Cys114 and Cys68/Cys163. Asn90, Asn97, Asn145, and Asn195 each carry an N-linked (GlcNAc...) asparagine glycan. The disordered stretch occupies residues 190–210 (ASSLRNDSSSSNRKAAKAPED). Over residues 191-202 (SSLRNDSSSSNR) the composition is skewed to low complexity. Residues 215–237 (WTAMALPALISLVIGFAFGALYW) traverse the membrane as a helical segment. The Cytoplasmic portion of the chain corresponds to 238–273 (KKKQSSLTRAVENIQINEEDNEISMLQQKEREFQEV).

Belongs to the SCF family. As to quaternary structure, homodimer, non-covalently linked. Heterotetramer with KIT, binding two KIT molecules; thereby mediates KIT dimerization and subsequent activation by autophosphorylation. In terms of processing, a soluble form is produced by proteolytic processing of isoform 1 in the extracellular domain. As to expression, expressed in the cochlea.

It localises to the cell membrane. Its subcellular location is the cytoplasm. The protein localises to the cytoskeleton. It is found in the cell projection. The protein resides in the lamellipodium. It localises to the filopodium. Its subcellular location is the secreted. Its function is as follows. Ligand for the receptor-type protein-tyrosine kinase KIT. Plays an essential role in the regulation of cell survival and proliferation, hematopoiesis, stem cell maintenance, gametogenesis, mast cell development, migration and function, and in melanogenesis. KITLG/SCF binding can activate several signaling pathways. Promotes phosphorylation of PIK3R1, the regulatory subunit of phosphatidylinositol 3-kinase, and subsequent activation of the kinase AKT1. KITLG/SCF and KIT also transmit signals via GRB2 and activation of RAS, RAF1 and the MAP kinases MAPK1/ERK2 and/or MAPK3/ERK1. KITLG/SCF and KIT promote activation of STAT family members STAT1, STAT3 and STAT5. KITLG/SCF and KIT promote activation of PLCG1, leading to the production of the cellular signaling molecules diacylglycerol and inositol 1,4,5-trisphosphate. KITLG/SCF acts synergistically with other cytokines, probably interleukins. The polypeptide is Kit ligand (Kitlg) (Mus musculus (Mouse)).